A 281-amino-acid chain; its full sequence is Putative phosphoenolpyruvate synthase regulatory protein (281 aa).

161 to 168 lines the ADP pocket; sequence GVSRSGKT.

Belongs to the pyruvate, phosphate/water dikinase regulatory protein family. PSRP subfamily.

It catalyses the reaction [pyruvate, water dikinase] + ADP = [pyruvate, water dikinase]-phosphate + AMP + H(+). The enzyme catalyses [pyruvate, water dikinase]-phosphate + phosphate + H(+) = [pyruvate, water dikinase] + diphosphate. Its function is as follows. Bifunctional serine/threonine kinase and phosphorylase involved in the regulation of the phosphoenolpyruvate synthase (PEPS) by catalyzing its phosphorylation/dephosphorylation. This Herminiimonas arsenicoxydans protein is Putative phosphoenolpyruvate synthase regulatory protein.